The chain runs to 331 residues: UDP-GalNAc:beta-1,3-N-acetylgalactosaminyltransferase 1 (331 aa).

Over 1–20 the chain is Cytoplasmic; the sequence is MAPALPITLPSKMSLRSLKW. The chain crosses the membrane as a helical; Signal-anchor for type II membrane protein span at residues 21–43; the sequence is SLLLLSLLSFLVMWYLSLPHYNV. Over 44-331 the chain is Lumenal; the sequence is IERVNWMYFY…VMLRNTTCHY (288 aa). 5 N-linked (GlcNAc...) asparagine glycosylation sites follow: asparagine 72, asparagine 154, asparagine 198, asparagine 212, and asparagine 326.

This sequence belongs to the glycosyltransferase 31 family. Requires Mg(2+) as cofactor.

It is found in the golgi apparatus membrane. The enzyme catalyses a globoside Gb3Cer (d18:1(4E)) + UDP-N-acetyl-alpha-D-galactosamine = a globoside Gb4Cer (d18:1(4E)) + UDP + H(+). It functions in the pathway protein modification; protein glycosylation. Its function is as follows. Transfers N-acetylgalactosamine onto globotriaosylceramide. Plays a critical role in preimplantation stage embryonic development. This chain is UDP-GalNAc:beta-1,3-N-acetylgalactosaminyltransferase 1 (B3GALNT1), found in Sus scrofa (Pig).